A 911-amino-acid polypeptide reads, in one-letter code: Valine--tRNA ligase (911 aa).

The 'HIGH' region signature appears at 57–67 (PTVSGSLHVGH). Residues 599–603 (KMSKS) carry the 'KMSKS' region motif. K602 is an ATP binding site. The segment at 882-911 (EESAAEDAPETEVAVEASELGEPPVKKPKH) is disordered.

It belongs to the class-I aminoacyl-tRNA synthetase family. ValS type 2 subfamily. In terms of assembly, monomer.

The protein resides in the cytoplasm. The enzyme catalyses tRNA(Val) + L-valine + ATP = L-valyl-tRNA(Val) + AMP + diphosphate. Functionally, catalyzes the attachment of valine to tRNA(Val). As ValRS can inadvertently accommodate and process structurally similar amino acids such as threonine, to avoid such errors, it has a 'posttransfer' editing activity that hydrolyzes mischarged Thr-tRNA(Val) in a tRNA-dependent manner. The polypeptide is Valine--tRNA ligase (Bifidobacterium longum subsp. infantis (strain ATCC 15697 / DSM 20088 / JCM 1222 / NCTC 11817 / S12)).